A 176-amino-acid polypeptide reads, in one-letter code: Large ribosomal subunit protein uL6 (176 aa).

This sequence belongs to the universal ribosomal protein uL6 family. In terms of assembly, part of the 50S ribosomal subunit.

This protein binds to the 23S rRNA, and is important in its secondary structure. It is located near the subunit interface in the base of the L7/L12 stalk, and near the tRNA binding site of the peptidyltransferase center. The polypeptide is Large ribosomal subunit protein uL6 (Methanosarcina mazei (strain ATCC BAA-159 / DSM 3647 / Goe1 / Go1 / JCM 11833 / OCM 88) (Methanosarcina frisia)).